Reading from the N-terminus, the 369-residue chain is Probable methyltransferase TCM_000331 (369 aa).

Residues Tyr18, Cys60, Asn65, Asp98, Leu99, Ser137, and Phe138 each coordinate S-adenosyl-L-homocysteine. Residues Asn176, Asp261, Phe263, and Asn264 each coordinate Mg(2+).

The protein belongs to the methyltransferase superfamily. Type-7 methyltransferase family. Requires Mg(2+) as cofactor.

The polypeptide is Probable methyltransferase TCM_000331 (Theobroma cacao (Cacao)).